Reading from the N-terminus, the 195-residue chain is Probable DNA-directed RNA polymerase subunit delta (195 aa).

The HTH HARE-type domain maps to 14–81; sequence LSMIEVAHAI…GDNTWGLRAW (68 aa). Residues 91–195 are disordered; it reads TVGETEDEED…DEEDKEDDEE (105 aa). Acidic residues-rich tracts occupy residues 116–171 and 179–195; these read TDDD…EDQL and FGDD…DDEE.

Belongs to the RpoE family. As to quaternary structure, RNAP is composed of a core of 2 alpha, a beta and a beta' subunits. The core is associated with a delta subunit and one of several sigma factors.

Functionally, participates in both the initiation and recycling phases of transcription. In the presence of the delta subunit, RNAP displays an increased specificity of transcription, a decreased affinity for nucleic acids, and an increased efficiency of RNA synthesis because of enhanced recycling. This Limosilactobacillus fermentum (strain NBRC 3956 / LMG 18251) (Lactobacillus fermentum) protein is Probable DNA-directed RNA polymerase subunit delta.